Consider the following 1074-residue polypeptide: ADAMTS-like protein 4 (1074 aa).

The first 24 residues, 1–24, serve as a signal peptide directing secretion; it reads MENWTGRPWLYLLLLLSLPQLCLD. The TSP type-1 1 domain maps to 48-93; sequence GPWVQWASCSQPCGVGVQRRSRTCQLPTVQLHPSLPLPPRPPRHPE. The interval 77–342 is disordered; the sequence is QLHPSLPLPP…QHPGAWLPLL (266 aa). The span at 103–119 shows a compositional bias: polar residues; the sequence is RPQTSPETLPLYRTQSR. The span at 132–152 shows a compositional bias: basic and acidic residues; that stretch reads LGREETQEIRAARRSRLRDPI. Positions 206 to 226 are enriched in polar residues; that stretch reads ANGSPQTELPPTELSVHTPSP. A compositionally biased stretch (gly residues) spans 310–323; that stretch reads GQQGQGPWGTGGTP. N-linked (GlcNAc...) (complex) asparagine glycosylation occurs at asparagine 490. TSP type-1 domains follow at residues 723 to 782, 783 to 842, 845 to 909, 910 to 969, and 970 to 1026; these read CPPY…QLRL, CGHW…GPCT, WFHS…GPCE, RTWR…QGQA, and CQDR…QPCS. Asparagine 773 is a glycosylation site (N-linked (GlcNAc...) asparagine). The 38-residue stretch at 1029 to 1066 folds into the PLAC domain; that stretch reads PDDQCKDSSPHCPLVVQARLCVYPYYTATCCRSCAHVL.

Interacts with CTSB. Interacts with FBN1. In terms of processing, N-glycosylated. Can be O-fucosylated by POFUT2 on a serine or a threonine residue found within the consensus sequence C1-X(2)-(S/T)-C2-G of the TSP type-1 repeat domains where C1 and C2 are the first and second cysteine residue of the repeat, respectively. Fucosylated repeats can then be further glycosylated by the addition of a beta-1,3-glucose residue by the glucosyltransferase, B3GALTL. Fucosylation mediates the efficient secretion of ADAMTS family members. Can also be C-glycosylated with one or two mannose molecules on tryptophan residues within the consensus sequence W-X-X-W of the TPRs. N- and C-glycosylations can also facilitate secretion. In terms of tissue distribution, expressed in colon, heart, leukocyte, liver, lung, skeletal muscle, spleen, testis and placenta. Weaker expression in bone marrow, brain tissue, kidney and pancreas. Expression studies in fetal tissues reveal strong expression in heart, kidney, liver, lung and skeletal muscle, but weaker expression in fetal brain and skin.

It localises to the secreted. It is found in the extracellular space. The protein localises to the extracellular matrix. Functionally, positive regulation of apoptosis. May facilitate FBN1 microfibril biogenesis. The polypeptide is ADAMTS-like protein 4 (ADAMTSL4) (Homo sapiens (Human)).